We begin with the raw amino-acid sequence, 156 residues long: Probable succinate transporter subunit YjjB (156 aa).

The next 4 helical transmembrane spans lie at 7 to 27, 54 to 74, 86 to 106, and 128 to 148; these read WALLQDMVLAAVPALGFAMVF, FGMNIEWASFLAAILIGIIGI, VFTVAAVIPMFPGISAYTAMI, and FLKASFIVGALSIGLSLPGIW.

It belongs to the ThrE exporter (TC 2.A.79) family. The transporter is composed of YjjB and YjjP.

The protein resides in the cell inner membrane. Its function is as follows. Involved in succinate export with YjjP. Both proteins are required for export. The chain is Probable succinate transporter subunit YjjB from Pectobacterium atrosepticum (strain SCRI 1043 / ATCC BAA-672) (Erwinia carotovora subsp. atroseptica).